The primary structure comprises 701 residues: Reverse gyrase subunit A (701 aa).

Positions Met-41–Val-197 constitute a Toprim domain. Glu-47 lines the Mg(2+) pocket. The RG C-terminal-type zinc-finger motif lies at Ile-117–Asp-143. The Zn(2+) site is built by Cys-120, Cys-123, Cys-133, and Cys-136. Asp-166 contacts Mg(2+). The Topo IA-type catalytic domain occupies Asn-213–Trp-602. The O-(5'-phospho-DNA)-tyrosine intermediate role is filled by Tyr-352.

It belongs to the type IA topoisomerase family. Heterodimer of an RgyA and RgyB subunit. The cofactor is Zn(2+). Requires Mg(2+) as cofactor.

Its subcellular location is the cytoplasm. Its function is as follows. Modifies the topological state of DNA by introducing positive supercoils in an ATP-dependent process. Binds to single-stranded DNA, transiently cleaves and then rejoins the end, introducing a positive supercoil in the process. The scissile phosphodiester is attacked by the catalytic tyrosine of the enzyme, resulting in the formation of a DNA-(5'-phosphotyrosyl)-enzyme intermediate. Probably involved in rewinding DNA strands in regions of the chromosome that have opened up to allow replication, transcription, DNA repair or for DNA protection. Reconstituted holoenzyme binds dsDNA a bit better than ssDNA, this subunit preferentially binds ssDNA. In isolation this subunit relaxes negatively-supercoiled DNA, and stimulates the endogenous ATPase activity of the RgyB subunit. This Nanoarchaeum equitans (strain Kin4-M) protein is Reverse gyrase subunit A.